An 887-amino-acid polypeptide reads, in one-letter code: Collagen alpha-2(I) chain (887 aa).

The segment covering 1 to 42 has biased composition (low complexity); it reads GPMGIMGPRGPPGASGAPGPQGFQGPPGEPGEPGQTGPAGAR. The disordered stretch occupies residues 1 to 887; sequence GPMGIMGPRG…PGPPGPPGPS (887 aa). Positions 51 to 65 are enriched in basic and acidic residues; sequence AGEDGHPGKPGRSGE. Low complexity-rich tracts occupy residues 126-155, 170-194, 221-236, 278-290, 368-388, 444-455, and 473-503; these read VGAP…SAGP, PVGS…VSGP, PGPV…RGIV, IRGS…IPGA, AGIA…AQGP, PGESGAAGPTGP, and EPGV…IPGP. Positions 504 to 517 are enriched in basic and acidic residues; sequence KGEKGEPGIRRDGA. 6 stretches are compositionally biased toward low complexity: residues 518 to 533, 560 to 580, 595 to 605, 658 to 673, 690 to 720, and 766 to 782; these read RGAP…AGAN, VGPA…QPGA, ATGFPGAAGRT, PGPQ…IGIP, EPGP…APGE, and EPGP…VGPR. The segment covering 791–802 has biased composition (basic and acidic residues); the sequence is RGDKGEPGDKGP. Positions 872 to 887 are enriched in pro residues; the sequence is AGPPGPPGPPGPPGPS.

It belongs to the fibrillar collagen family. In terms of assembly, trimers of one alpha 2(I) and two alpha 1(I) chains. Interacts (via C-terminus) with TMEM131 (via PapD-L domain); the interaction is direct and is involved in assembly and TRAPPIII ER-to-Golgi transport complex-dependent secretion of collagen. Post-translationally, prolines at the third position of the tripeptide repeating unit (G-X-Y) are hydroxylated in some or all of the chains. As to expression, forms the fibrils of tendon, ligaments and bones. In bones, the fibrils are mineralized with calcium hydroxyapatite.

It localises to the secreted. It is found in the extracellular space. Its subcellular location is the extracellular matrix. Functionally, type I collagen is a member of group I collagen (fibrillar forming collagen). This Hippopotamus amphibius (Hippopotamus) protein is Collagen alpha-2(I) chain.